We begin with the raw amino-acid sequence, 186 residues long: UPF0301 protein NTHI0415 (186 aa).

The protein belongs to the UPF0301 (AlgH) family.

The sequence is that of UPF0301 protein NTHI0415 from Haemophilus influenzae (strain 86-028NP).